Consider the following 463-residue polypeptide: Methionine aminopeptidase 2-1 (463 aa).

Residues 1 to 12 are compositionally biased toward basic and acidic residues; it reads MGSKTPDGHRQG. Residues 1–96 are disordered; it reads MGSKTPDGHR…SGQQTTPPRV (96 aa). Over residues 41-53 the composition is skewed to acidic residues; the sequence is SGEDDEDGDDDEE. Positions 58 to 67 are enriched in polar residues; the sequence is DLNSRAQPNN. Residues 70–85 are compositionally biased toward basic residues; sequence KKRKRKNNKKKKKKRP. Histidine 215 is a binding site for substrate. Aspartate 236, aspartate 247, and histidine 316 together coordinate a divalent metal cation. Histidine 324 contacts substrate. A divalent metal cation-binding residues include glutamate 349 and glutamate 444.

It belongs to the peptidase M24A family. Methionine aminopeptidase eukaryotic type 2 subfamily. It depends on Co(2+) as a cofactor. Requires Zn(2+) as cofactor. Mn(2+) serves as cofactor. Fe(2+) is required as a cofactor.

The protein resides in the cytoplasm. It carries out the reaction Release of N-terminal amino acids, preferentially methionine, from peptides and arylamides.. Its function is as follows. Cotranslationally removes the N-terminal methionine from nascent proteins. The N-terminal methionine is often cleaved when the second residue in the primary sequence is small and uncharged (Met-Ala-, Cys, Gly, Pro, Ser, Thr, or Val). In Arthroderma otae (strain ATCC MYA-4605 / CBS 113480) (Microsporum canis), this protein is Methionine aminopeptidase 2-1.